A 281-amino-acid polypeptide reads, in one-letter code: MAAVSETVLVSAPQDHDAQAASDPQATAADSPLEDFRVRCTLKRAVMEVMEMCGRFVQELGAVLPEDVRELALRDAQWTFESAVQENVSFNGQAWEEAKEHGLMDSDIKVLEDEFDELIVDVATKRRQYPRRILESVIKTLKAQHASLKQYHPVVHPLDLKCDPDPASRVEDLKCRGEAIAKEMSEAMKALPVLIEQGEGFSQVLKMRPVIQLQRINQEVFSSLYRKADFKPDTCVTHVETTPAETGARKASNIVLKRKKAPDCAQRKRYPLRLQRINLDM.

The disordered stretch occupies residues 11–30 (SAPQDHDAQAASDPQATAAD). The span at 19 to 30 (QAASDPQATAAD) shows a compositional bias: low complexity.

As to quaternary structure, component of the MIS12 complex composed of MIS12, DSN1, NSL1/DC8 and PMF1. Interacts with KNL1.

Its subcellular location is the nucleus. The protein localises to the chromosome. It is found in the centromere. It localises to the kinetochore. Its function is as follows. Part of the MIS12 complex which is required for normal chromosome alignment and segregation and kinetochore formation during mitosis. The polypeptide is Kinetochore-associated protein NSL1 homolog (Nsl1) (Mus musculus (Mouse)).